Here is a 165-residue protein sequence, read N- to C-terminus: NADPH-dependent 7-cyano-7-deazaguanine reductase (165 aa).

The active-site Thioimide intermediate is the C56. The Proton donor role is filled by D63. Residues 78 to 80 (VES) and 97 to 98 (HE) contribute to the substrate site.

The protein belongs to the GTP cyclohydrolase I family. QueF type 1 subfamily.

The protein localises to the cytoplasm. It catalyses the reaction 7-aminomethyl-7-carbaguanine + 2 NADP(+) = 7-cyano-7-deazaguanine + 2 NADPH + 3 H(+). It functions in the pathway tRNA modification; tRNA-queuosine biosynthesis. Its function is as follows. Catalyzes the NADPH-dependent reduction of 7-cyano-7-deazaguanine (preQ0) to 7-aminomethyl-7-deazaguanine (preQ1). The protein is NADPH-dependent 7-cyano-7-deazaguanine reductase of Bacillus mycoides (strain KBAB4) (Bacillus weihenstephanensis).